Consider the following 554-residue polypeptide: Glucose-6-phosphate isomerase (554 aa).

Glu358 serves as the catalytic Proton donor. Catalysis depends on residues His389 and Lys515. Positions 527-540 are enriched in polar residues; that stretch reads ANNSPAPQSDSSTD. A disordered region spans residues 527–554; that stretch reads ANNSPAPQSDSSTDALVRRYRSERGRTS. Positions 542 to 554 are enriched in basic and acidic residues; sequence LVRRYRSERGRTS.

This sequence belongs to the GPI family.

The protein localises to the cytoplasm. The enzyme catalyses alpha-D-glucose 6-phosphate = beta-D-fructose 6-phosphate. It functions in the pathway carbohydrate biosynthesis; gluconeogenesis. It participates in carbohydrate degradation; glycolysis; D-glyceraldehyde 3-phosphate and glycerone phosphate from D-glucose: step 2/4. Catalyzes the reversible isomerization of glucose-6-phosphate to fructose-6-phosphate. The protein is Glucose-6-phosphate isomerase of Mycolicibacterium paratuberculosis (strain ATCC BAA-968 / K-10) (Mycobacterium paratuberculosis).